The primary structure comprises 226 residues: V-type proton ATPase subunit E 1 (226 aa).

Residue Ala2 is modified to N-acetylalanine. Tyr56 carries the phosphotyrosine modification.

It belongs to the V-ATPase E subunit family. V-ATPase is a heteromultimeric enzyme made up of two complexes: the ATP-hydrolytic V1 complex and the proton translocation V0 complex. The V1 complex consists of three catalytic AB heterodimers that form a heterohexamer, three peripheral stalks each consisting of EG heterodimers, one central rotor including subunits D and F, and the regulatory subunits C and H. The proton translocation complex V0 consists of the proton transport subunit a, a ring of proteolipid subunits c9c'', rotary subunit d, subunits e and f, and the accessory subunits ATP6AP1/Ac45 and ATP6AP2/PRR. Interacts with RABL2/RABL2A; binds preferentially to GTP-bound RABL2. Interacts with ALDOC. Interacts with RAB11B. As to expression, kidney; localizes to early distal nephron, encompassing thick ascending limbs and distal convoluted tubules (at protein level). Ubiquitous. High expression in the skin.

It is found in the apical cell membrane. It localises to the cytoplasmic vesicle. Its subcellular location is the secretory vesicle. The protein resides in the synaptic vesicle membrane. The protein localises to the clathrin-coated vesicle membrane. Functionally, subunit of the V1 complex of vacuolar(H+)-ATPase (V-ATPase), a multisubunit enzyme composed of a peripheral complex (V1) that hydrolyzes ATP and a membrane integral complex (V0) that translocates protons. V-ATPase is responsible for acidifying and maintaining the pH of intracellular compartments and in some cell types, is targeted to the plasma membrane, where it is responsible for acidifying the extracellular environment. The polypeptide is V-type proton ATPase subunit E 1 (ATP6V1E1) (Homo sapiens (Human)).